The following is a 534-amino-acid chain: Bifunctional purine biosynthesis protein PurH (534 aa).

Residues 6–151 (TRLPIRRALI…KNHKDVAIVV (146 aa)) form the MGS-like domain.

Belongs to the PurH family.

It catalyses the reaction (6R)-10-formyltetrahydrofolate + 5-amino-1-(5-phospho-beta-D-ribosyl)imidazole-4-carboxamide = 5-formamido-1-(5-phospho-D-ribosyl)imidazole-4-carboxamide + (6S)-5,6,7,8-tetrahydrofolate. The catalysed reaction is IMP + H2O = 5-formamido-1-(5-phospho-D-ribosyl)imidazole-4-carboxamide. The protein operates within purine metabolism; IMP biosynthesis via de novo pathway; 5-formamido-1-(5-phospho-D-ribosyl)imidazole-4-carboxamide from 5-amino-1-(5-phospho-D-ribosyl)imidazole-4-carboxamide (10-formyl THF route): step 1/1. Its pathway is purine metabolism; IMP biosynthesis via de novo pathway; IMP from 5-formamido-1-(5-phospho-D-ribosyl)imidazole-4-carboxamide: step 1/1. The chain is Bifunctional purine biosynthesis protein PurH from Pseudomonas syringae pv. tomato (strain ATCC BAA-871 / DC3000).